Here is a 706-residue protein sequence, read N- to C-terminus: Probable serine/threonine-protein kinase zyg-1 (706 aa).

The Protein kinase domain occupies 13-249 (YSHLKEIGKG…LTQIVLSEFM (237 aa)). ATP-binding positions include 19–27 (IGKGGFGVV) and Lys41. The active-site Proton acceptor is Asp131. Composition is skewed to basic and acidic residues over residues 261–290 (SREH…DGRA) and 323–336 (FDSE…RDSG). Disordered stretches follow at residues 261 to 351 (SREH…NRSQ) and 566 to 632 (SPSS…VAPS). The span at 566–579 (SPSSLMPSGSSQTS) shows a compositional bias: low complexity. 2 stretches are compositionally biased toward polar residues: residues 580-592 (RFPF…NQPS) and 603-629 (KPTS…SPSV).

Belongs to the protein kinase superfamily. Ser/Thr protein kinase family. As to quaternary structure, interacts with sel-10. Probably ubiquitinated by the SCF(sel-10) and SCF(lin-23) E3 ubiquitin ligase complexes, leading to its proteasomal degradation.

The protein resides in the cytoplasm. It localises to the cytoskeleton. It is found in the microtubule organizing center. Its subcellular location is the centrosome. The protein localises to the centriole. It catalyses the reaction L-seryl-[protein] + ATP = O-phospho-L-seryl-[protein] + ADP + H(+). The catalysed reaction is L-threonyl-[protein] + ATP = O-phospho-L-threonyl-[protein] + ADP + H(+). In terms of biological role, protein kinase that plays a central role in centrosome duplication, control of centrosome size, spindle formation and nuclear envelope breakdown during cell divisions. Paternal copy is required to regulate synthesis of daughter centrioles prior to fertilization. Maternal copy regulates centrosome duplication during later cell cycles. Functions upstream of sas-5 and sas-6, and is required for their localization to the centrosome. Its role in nuclear envelope breakdown is mediated by the spindly-like protein spdl-1 and the RZZ complex, which in turn recruits the spindle checkpoint proteins mdf-1 and mdf-2, dynein and dynactin to unattached kinetochores. This Caenorhabditis elegans protein is Probable serine/threonine-protein kinase zyg-1.